Here is a 792-residue protein sequence, read N- to C-terminus: uncharacterized protein (792 aa).

361–362 (WD) serves as a coordination point for substrate. Glu-488 (proton donor) is an active-site residue. Residue 590-591 (KQ) participates in substrate binding. Residues 753–792 (DSPSTIAVRDRKPLLPPPSQPPGREPVSRRHKSLIISAAR) form a disordered region. Positions 766 to 776 (LLPPPSQPPGR) are enriched in pro residues.

Belongs to the glycosyl hydrolase 65 family.

This is an uncharacterized protein from Mycobacterium leprae (strain TN).